The sequence spans 366 residues: Chorismate synthase (366 aa).

NADP(+)-binding residues include Arg48 and Arg54. Residues Arg125 to Ser127, Asn238 to Ala239, Gly278, Lys293 to Ser297, and Arg319 each bind FMN.

This sequence belongs to the chorismate synthase family. Homotetramer. FMNH2 is required as a cofactor.

It catalyses the reaction 5-O-(1-carboxyvinyl)-3-phosphoshikimate = chorismate + phosphate. The protein operates within metabolic intermediate biosynthesis; chorismate biosynthesis; chorismate from D-erythrose 4-phosphate and phosphoenolpyruvate: step 7/7. Catalyzes the anti-1,4-elimination of the C-3 phosphate and the C-6 proR hydrogen from 5-enolpyruvylshikimate-3-phosphate (EPSP) to yield chorismate, which is the branch point compound that serves as the starting substrate for the three terminal pathways of aromatic amino acid biosynthesis. This reaction introduces a second double bond into the aromatic ring system. This Neisseria meningitidis serogroup A / serotype 4A (strain DSM 15465 / Z2491) protein is Chorismate synthase.